The following is a 151-amino-acid chain: MASMQKRLQKELLALQNDPPPGMTLNEKSVQNSITQWIVDMEGAPGTLYEGEKFQLLFKFSSRYPFDSPQVMFTGENIPVHPHVYSNGHICLSILTEDWSPALSVQSVCLSIISMLSSCKEKRRPPDNSFYVRTCNKNPKKTKWWYHDDTC.

A Peptide (Met-Gly) (interchain with G-Cter in ubiquitin) cross-link involves residue M1. The UBC core domain occupies 3 to 151 (SMQKRLQKEL…TKWWYHDDTC (149 aa)). C91 (glycyl thioester intermediate) is an active-site residue.

The protein belongs to the ubiquitin-conjugating enzyme family. As to quaternary structure, homodimer. Interacts with FANCL. Interacts with STUB1/CHIP. In terms of processing, ubiquitinated in vitro in the presence of FANCL. Autoubiquitinated at Met-1.

The protein resides in the nucleus. It catalyses the reaction S-ubiquitinyl-[E1 ubiquitin-activating enzyme]-L-cysteine + [E2 ubiquitin-conjugating enzyme]-L-cysteine = [E1 ubiquitin-activating enzyme]-L-cysteine + S-ubiquitinyl-[E2 ubiquitin-conjugating enzyme]-L-cysteine.. It carries out the reaction S-ubiquitinyl-[E1 ubiquitin-activating enzyme]-L-cysteine + [acceptor protein]-N-terminal-amino acid = [E1 ubiquitin-activating enzyme]-L-cysteine + N-terminal-ubiquitinyl-[acceptor protein].. Its pathway is protein modification; protein ubiquitination. Accepts ubiquitin from the E1 complex and catalyzes its covalent attachment to other proteins. Specifically monoubiquitinates the N-terminus of various substrates, including ATXN3, MAPT/TAU, POLR2H/RPB8 and STUB1/CHIP, by recognizing backbone atoms of disordered N-termini. Involved in degradation of misfolded chaperone substrates by mediating monoubiquitination of STUB1/CHIP, leading to recruitment of ATXN3 to monoubiquitinated STUB1/CHIP, and restriction of the length of ubiquitin chain attached to STUB1/CHIP substrates by ATXN3. After UV irradiation, but not after mitomycin-C (MMC) treatment, acts as a specific E2 ubiquitin-conjugating enzyme for the Fanconi anemia complex by associating with E3 ubiquitin-protein ligase FANCL and catalyzing monoubiquitination of FANCD2, a key step in the DNA damage pathway. In vitro catalyzes 'Lys-11'-linked polyubiquitination. UBE2W-catalyzed ubiquitination also occurs in the presence of inactive RING/U-box type E3s, i.e. lacking the active site cysteine residues to form thioester bonds with ubiquitin, or even in the absence of E3, albeit at a slower rate. The chain is Ubiquitin-conjugating enzyme E2 W (UBE2W) from Bos taurus (Bovine).